Reading from the N-terminus, the 471-residue chain is Ribulose bisphosphate carboxylase large chain (471 aa).

Residues N119 and T169 each coordinate substrate. The active-site Proton acceptor is K171. K173 provides a ligand contact to substrate. Mg(2+) contacts are provided by K197, D199, and E200. K197 carries the post-translational modification N6-carboxylysine. Catalysis depends on H290, which acts as the Proton acceptor. Substrate is bound by residues R291, H323, and S375.

The protein belongs to the RuBisCO large chain family. Type I subfamily. Heterohexadecamer of 8 large chains and 8 small chains; disulfide-linked. The disulfide link is formed within the large subunit homodimers. Mg(2+) serves as cofactor. The disulfide bond which can form in the large chain dimeric partners within the hexadecamer appears to be associated with oxidative stress and protein turnover.

The protein localises to the carboxysome. It catalyses the reaction 2 (2R)-3-phosphoglycerate + 2 H(+) = D-ribulose 1,5-bisphosphate + CO2 + H2O. The catalysed reaction is D-ribulose 1,5-bisphosphate + O2 = 2-phosphoglycolate + (2R)-3-phosphoglycerate + 2 H(+). Its function is as follows. RuBisCO catalyzes two reactions: the carboxylation of D-ribulose 1,5-bisphosphate, the primary event in carbon dioxide fixation, as well as the oxidative fragmentation of the pentose substrate in the photorespiration process. Both reactions occur simultaneously and in competition at the same active site. The chain is Ribulose bisphosphate carboxylase large chain from Crocosphaera subtropica (strain ATCC 51142 / BH68) (Cyanothece sp. (strain ATCC 51142)).